The primary structure comprises 290 residues: Cilia- and flagella-associated protein 298 (290 aa).

The protein belongs to the CFAP298 family. As to quaternary structure, interacts with dnaaf1/swt. Interacts with lrrc6/sea. Interacts with dvl (via DEP and PDZ domains). In terms of tissue distribution, strongly expressed in ciliated tissues of the embryonic trunk, including the pronephric ducts and spinal canal.

The protein resides in the cytoplasm. It localises to the cytoskeleton. Its subcellular location is the cilium basal body. Functionally, plays a role in motile cilium function, possibly by acting on outer dynein arm assembly. Seems to be important for initiation rather than maintenance of cilium motility. Required for correct positioning of cilia at the apical cell surface, suggesting an additional role in the planar cell polarity (PCP) pathway. May suppress canonical Wnt signaling activity. This chain is Cilia- and flagella-associated protein 298, found in Danio rerio (Zebrafish).